The chain runs to 292 residues: 33 kDa chaperonin (292 aa).

Disulfide bonds link cysteine 230–cysteine 232 and cysteine 263–cysteine 266.

This sequence belongs to the HSP33 family. Post-translationally, under oxidizing conditions two disulfide bonds are formed involving the reactive cysteines. Under reducing conditions zinc is bound to the reactive cysteines and the protein is inactive.

It is found in the cytoplasm. Functionally, redox regulated molecular chaperone. Protects both thermally unfolding and oxidatively damaged proteins from irreversible aggregation. Plays an important role in the bacterial defense system toward oxidative stress. In Sodalis glossinidius (strain morsitans), this protein is 33 kDa chaperonin.